The following is a 190-amino-acid chain: CASP-like protein 2U2 (190 aa).

Residues 1–10 (MGEKMQGFQG) are Cytoplasmic-facing. Residues 11-31 (WSIGIRFLTSCVSIASLILLL) form a helical membrane-spanning segment. Residues 32–59 (KSKQTVQVSVGLDYVTQQVKYSDTSAFV) are Extracellular-facing. Residues 60–80 (YLVFSDILVAVYCIVVLVGLI) form a helical membrane-spanning segment. At 81–94 (PAALGKSHPGKAGQ) the chain is on the cytoplasmic side. The helical transmembrane segment at 95–115 (WAIFIFDQVLAYVLLAAASSA) threads the bilayer. The Extracellular segment spans residues 116–144 (TEVAYLADKGMAKTSWEAVCPRFAHFCHT). The helical transmembrane segment at 145–165 (VMASISLSFVAVLLLALLAVV) threads the bilayer. At 166–190 (SASGLFGRFYRRPLFAVKMRHNTLI) the chain is on the cytoplasmic side.

This sequence belongs to the Casparian strip membrane proteins (CASP) family. As to quaternary structure, homodimer and heterodimers.

Its subcellular location is the cell membrane. This chain is CASP-like protein 2U2, found in Pteridium aquilinum subsp. aquilinum (Bracken fern).